A 213-amino-acid polypeptide reads, in one-letter code: ATP phosphoribosyltransferase (213 aa).

The protein belongs to the ATP phosphoribosyltransferase family. Short subfamily. Heteromultimer composed of HisG and HisZ subunits.

It localises to the cytoplasm. The enzyme catalyses 1-(5-phospho-beta-D-ribosyl)-ATP + diphosphate = 5-phospho-alpha-D-ribose 1-diphosphate + ATP. It participates in amino-acid biosynthesis; L-histidine biosynthesis; L-histidine from 5-phospho-alpha-D-ribose 1-diphosphate: step 1/9. In terms of biological role, catalyzes the condensation of ATP and 5-phosphoribose 1-diphosphate to form N'-(5'-phosphoribosyl)-ATP (PR-ATP). Has a crucial role in the pathway because the rate of histidine biosynthesis seems to be controlled primarily by regulation of HisG enzymatic activity. This Shouchella clausii (strain KSM-K16) (Alkalihalobacillus clausii) protein is ATP phosphoribosyltransferase.